Reading from the N-terminus, the 262-residue chain is Acyl-[acyl-carrier-protein]--UDP-N-acetylglucosamine O-acyltransferase (262 aa).

The protein belongs to the transferase hexapeptide repeat family. LpxA subfamily. As to quaternary structure, homotrimer.

Its subcellular location is the cytoplasm. The catalysed reaction is a (3R)-hydroxyacyl-[ACP] + UDP-N-acetyl-alpha-D-glucosamine = a UDP-3-O-[(3R)-3-hydroxyacyl]-N-acetyl-alpha-D-glucosamine + holo-[ACP]. It functions in the pathway glycolipid biosynthesis; lipid IV(A) biosynthesis; lipid IV(A) from (3R)-3-hydroxytetradecanoyl-[acyl-carrier-protein] and UDP-N-acetyl-alpha-D-glucosamine: step 1/6. Its function is as follows. Involved in the biosynthesis of lipid A, a phosphorylated glycolipid that anchors the lipopolysaccharide to the outer membrane of the cell. This Pectobacterium atrosepticum (strain SCRI 1043 / ATCC BAA-672) (Erwinia carotovora subsp. atroseptica) protein is Acyl-[acyl-carrier-protein]--UDP-N-acetylglucosamine O-acyltransferase.